The primary structure comprises 603 residues: Elongation factor 4 (603 aa).

The tr-type G domain maps to 7-189 (SRIRNFSIIA…SIVHLVPPPE (183 aa)). Residues 19-24 (DHGKST) and 136-139 (NKID) contribute to the GTP site.

It belongs to the TRAFAC class translation factor GTPase superfamily. Classic translation factor GTPase family. LepA subfamily.

It localises to the cell inner membrane. It catalyses the reaction GTP + H2O = GDP + phosphate + H(+). Functionally, required for accurate and efficient protein synthesis under certain stress conditions. May act as a fidelity factor of the translation reaction, by catalyzing a one-codon backward translocation of tRNAs on improperly translocated ribosomes. Back-translocation proceeds from a post-translocation (POST) complex to a pre-translocation (PRE) complex, thus giving elongation factor G a second chance to translocate the tRNAs correctly. Binds to ribosomes in a GTP-dependent manner. This is Elongation factor 4 from Acaryochloris marina (strain MBIC 11017).